The following is a 213-amino-acid chain: Dimethyl sulfoxide reductase transcriptional activator (213 aa).

In terms of domain architecture, HTH bat-type spans 155-206; the sequence is LTAKQREAALIAVHHGYYETPRRTELATLAEALGISKSALSQRLNAVEAKLA.

Involved in activating dmsEABCD gene expression related to dimethyl sulfoxide (DMSO) reductase. Required for anaerobic respiration on dimethyl sulfoxide (DMSO). This is Dimethyl sulfoxide reductase transcriptional activator from Haloferax volcanii (strain ATCC 29605 / DSM 3757 / JCM 8879 / NBRC 14742 / NCIMB 2012 / VKM B-1768 / DS2) (Halobacterium volcanii).